Consider the following 723-residue polypeptide: MGVKKPWIQLQKRLNWWVREQDWNQHVDQLHMLQQKSIWESPLLRAAKENDMCTLKRLQHDQNCDFRQRGALGETALHVAALYDNLDAAIMLMETAPYLVTESTLCEPFVGQTALHIAIMNQNVNLVRALLARGASASARATGSAFHRSSHNLIYYGEHPLSFAACVGSEEIVRLLIEHGADIRAQDSLGNTVLHILVLQPNKTFACQMYNLLLSHDGGDHLKSLELVPNNQGLTPFKLAGVEGNTVMFQHLMQKRKHIQWSLGPLTSSIYDLTEIDSWGEDLSFLELVVSSKKKEARQILEQTPVKELVSLKWKKYGQPYFCLLGMLYIFYMICFTTCCVYRPLKFRDANRTHVRDNTVLEQKPLQEAYVTYQDKVRLVGELVTVIGAVVILLIEIPDIFRVGASRYFGHTVLGGPFHVIIITYASLVLLIMVMRLTSMNGEVVPISMALVLGWCSVMYFSRGFQMLGPFTIMIQKMIFGDLLRFCWLMAMVILGFASAFYIIFQTEDPESLGEFSDYPTAMFSTFELFLTIIDGPANYSVDLPFMYHLTYFAFAIIATLLMLNLFIAMMGDTHWRVAQERDELWRAQVVATTVMLERKMPRFLWPRSGICGCEYGLGDRWFLRVEHHQEQNPYRVLRYVEAFKSSDKEEVQEQLSEKQPSGTETGTLARGSVVLQTPPLSRTTSLSSNSHRGWEILRRNTLGHLNLGQDLGEGDGEEIYHF.

The Cytoplasmic segment spans residues 1-320 (MGVKKPWIQL…SLKWKKYGQP (320 aa)). ANK repeat units lie at residues 72 to 101 (LGET…YLVT), 110 to 139 (VGQT…SASA), 156 to 185 (YGEH…DIRA), 189 to 222 (LGNT…GDHL), and 232 to 261 (QGLT…HIQW). A helical membrane pass occupies residues 321–341 (YFCLLGMLYIFYMICFTTCCV). Topologically, residues 342–378 (YRPLKFRDANRTHVRDNTVLEQKPLQEAYVTYQDKVR) are extracellular. A glycan (N-linked (GlcNAc...) asparagine) is linked at Asn351. A helical membrane pass occupies residues 379 to 401 (LVGELVTVIGAVVILLIEIPDIF). Residues 402-412 (RVGASRYFGHT) are Cytoplasmic-facing. The helical transmembrane segment at 413-435 (VLGGPFHVIIITYASLVLLIMVM) threads the bilayer. At 436-441 (RLTSMN) the chain is on the extracellular side. The helical transmembrane segment at 442 to 462 (GEVVPISMALVLGWCSVMYFS) threads the bilayer. The Cytoplasmic segment spans residues 463 to 485 (RGFQMLGPFTIMIQKMIFGDLLR). A helical membrane pass occupies residues 486-506 (FCWLMAMVILGFASAFYIIFQ). An intramembrane region (pore-forming) is located at residues 517 to 537 (SDYPTAMFSTFELFLTIIDGP). Residue Asp535 participates in Ca(2+) binding. A helical membrane pass occupies residues 550–570 (LTYFAFAIIATLLMLNLFIAM). The Cytoplasmic segment spans residues 571 to 723 (MGDTHWRVAQ…EGDGEEIYHF (153 aa)). The segment at 591-595 (VATTV) is interaction with S100A10. The involved in Ca(2+)-dependent inactivation stretch occupies residues 643–646 (AFKS). A disordered region spans residues 651–674 (EVQEQLSEKQPSGTETGTLARGSV). Polar residues predominate over residues 654–667 (EQLSEKQPSGTETG). The residue at position 678 (Thr678) is a Phosphothreonine. Ser682 bears the Phosphoserine mark. The involved in Ca(2+)-dependent inactivation stretch occupies residues 693–723 (RGWEILRRNTLGHLNLGQDLGEGDGEEIYHF).

The protein belongs to the transient receptor (TC 1.A.4) family. TrpV subfamily. TRPV5 sub-subfamily. In terms of assembly, homotetramer and probably heterotetramer with TRPV6. Interacts with TRPV6. Interacts with S100A10 and probably with the ANAX2-S100A10 heterotetramer. The interaction with S100A10 is required for the trafficking to the plasma membrane. Interacts with calmodulin. Interacts with BSPRY, which results in its inactivation. In terms of processing, glycosylated. As to expression, detected in kidney (at protein level). Detected in kidney.

It is found in the cell membrane. It localises to the apical cell membrane. It carries out the reaction Ca(2+)(in) = Ca(2+)(out). Activated by WNK3. Constitutively active calcium selective cation channel thought to be involved in Ca(2+) reabsorption in kidney and intestine. Required for normal Ca(2+) reabsorption in the kidney distal convoluted tubules. The channel is activated by low internal calcium level and the current exhibits an inward rectification. A Ca(2+)-dependent feedback regulation includes fast channel inactivation and slow current decay. Heteromeric assembly with TRPV6 seems to modify channel properties. TRPV5-TRPV6 heteromultimeric concatemers exhibit voltage-dependent gating. The protein is Transient receptor potential cation channel subfamily V member 5 (Trpv5) of Rattus norvegicus (Rat).